The sequence spans 81 residues: Protease inhibitor 1 (81 aa).

The first 24 residues, 1 to 24 (MSSGGLLLLLGLLTLWAELTPVSG), serve as a signal peptide directing secretion. The 51-residue stretch at 29 to 79 (CELPAETGPCKARIRAFYYNPHSHKCLEFTYGGCKGNANNFKTIDECNRTC) folds into the BPTI/Kunitz inhibitor domain. Cystine bridges form between C29/C79, C38/C62, and C54/C75.

As to expression, expressed by the venom gland.

It localises to the secreted. In terms of biological role, snake venom serine protease inhibitor. The polypeptide is Protease inhibitor 1 (Walterinnesia aegyptia (Desert black snake)).